Reading from the N-terminus, the 396-residue chain is L-cysteine desulfidase (396 aa).

The Proton acceptor role is filled by cysteine 23. Cysteine 287, cysteine 329, and cysteine 336 together coordinate [4Fe-4S] cluster.

This sequence belongs to the L-cysteine desulfidase family. In terms of assembly, homotrimer. The cofactor is [4Fe-4S] cluster.

It catalyses the reaction L-cysteine + H2O = hydrogen sulfide + pyruvate + NH4(+) + H(+). Catalyzes the cleavage of L-cysteine to form 2-aminoprop-2-enoate and sulfide. The former then spontaneously hydrolyzes to pyruvate and NH(3). May be responsible for the production of sulfide required for the biosynthesis of iron-sulfur centers in this archaea. This is L-cysteine desulfidase from Methanococcus maripaludis (strain DSM 14266 / JCM 13030 / NBRC 101832 / S2 / LL).